The chain runs to 455 residues: DNA N(6)-methyladenine demethylase ALKBH1C (455 aa).

Disordered regions lie at residues 1–114 (MNHS…AGDN) and 173–194 (SSVEDQKSAPKADGAGNSSNES). Residues 345–455 (LPDICIVNFY…GRLNLTFRQY (111 aa)) enclose the Fe2OG dioxygenase domain. 352-354 (NFY) contributes to the 2-oxoglutarate binding site. H363, D365, and H423 together coordinate Fe cation. 447 to 453 (RLNLTFR) contacts 2-oxoglutarate.

The protein belongs to the alkB family. It depends on Fe(2+) as a cofactor. As to expression, expressed at low levels in roots and seedlings, but barely in cauline leaves, rosette leaves, stems, siliques and flowers.

The protein localises to the nucleus. The protein resides in the cytoplasm. It carries out the reaction an N(6)-methyl-2'-deoxyadenosine in DNA + 2-oxoglutarate + O2 = a 2'-deoxyadenosine in DNA + formaldehyde + succinate + CO2. Its function is as follows. Dioxygenase that catalyzes DNA N(6)-methyladenine (6 mA) demethylation with a low efficiency. In Arabidopsis thaliana (Mouse-ear cress), this protein is DNA N(6)-methyladenine demethylase ALKBH1C.